Here is a 79-residue protein sequence, read N- to C-terminus: RNA-binding protein KhpA (79 aa).

Residues 32–79 enclose the KH domain; that stretch reads FLEYHLNLDQSDVGRVIGRKGRTISAIRTIVYSVPTEYKKVRIVIDEK.

This sequence belongs to the KhpA RNA-binding protein family. Forms a complex with KhpB. KhpA and KhpB colocalize throughout the cell cycle, with some increase at midcell in dividing cells.

The protein resides in the cytoplasm. A probable RNA chaperone. Forms a complex with KhpB which presumably binds to about 170 cellular RNAs (mRNA, tRNA intergenic RNA and sRNAs); the proteins alone each bind the same set of RNAs. A mutation in this gene suppresses the requirement for PBP2b (penA, a transpeptidase) in peripheral peptidoglycan (PG) synthesis. Probably plays a role in PG homeostasis and regulating peripheral PG synthesis. The protein is RNA-binding protein KhpA of Streptococcus pneumoniae serotype 2 (strain D39 / NCTC 7466).